The primary structure comprises 1984 residues: Sodium channel protein type 9 subunit alpha (1984 aa).

Topologically, residues 1–125 are cytoplasmic; that stretch reads MAMLPPPGPQ…RRISIKILVH (125 aa). Residues 26–39 are compositionally biased toward basic and acidic residues; that stretch reads RISEEKAKGHKDEK. The tract at residues 26 to 55 is disordered; the sequence is RISEEKAKGHKDEKKDDEEEGPKPSSDLEA. The I repeat unit spans residues 112–410; it reads FSPLRRISIK…VAMAYEEQNQ (299 aa). Residues 126–145 traverse the membrane as a helical segment; sequence SLFSMLIMCTILTNCIFMTM. The Extracellular segment spans residues 146–150; it reads SNPPD. The helical transmembrane segment at 151-172 threads the bilayer; sequence WTKNVEYTFTGIYTFESLIKIL. Over 173–185 the chain is Cytoplasmic; sequence ARGFCVGEFTFLR. The chain crosses the membrane as a helical span at residues 186–204; the sequence is DPWNWLDFVVIVFAYLTEF. The Extracellular segment spans residues 205 to 210; that stretch reads VNLGNV. A helical membrane pass occupies residues 211–227; that stretch reads SALRTFRVLRALKTISV. The Cytoplasmic portion of the chain corresponds to 228–241; the sequence is IPGLKTIVGALIQS. The helical transmembrane segment at 242–267 threads the bilayer; that stretch reads VKKLSDVMILTVFCLSVFALIGLQLF. Topologically, residues 268-346 are extracellular; the sequence is MGNLKHKCFR…PDYGYTSFDT (79 aa). Cysteine 275 and cysteine 324 form a disulfide bridge. Positions 347-363 form an intramembrane region, pore-forming; the sequence is FGWAFLALFRLMTQDYW. At 364-376 the chain is on the extracellular side; sequence ENLYQQTLRAAGK. A helical membrane pass occupies residues 377 to 402; that stretch reads TYMIFFVVVIFLGSFYLINLILAVVA. Positions 402–449 form a coiled coil; the sequence is AMAYEEQNQANIEEAKQKELEFQQMLDRLKKEQEEAEAIAAAAAEYTS. The Cytoplasmic segment spans residues 403–744; sequence MAYEEQNQAN…FIYFIVMDPF (342 aa). Positions 458 to 471 are enriched in low complexity; it reads LSESSSETSRLSSK. Disordered stretches follow at residues 458-540 and 574-609; these read LSES…SIRG and HSIF…RSPP. The span at 474–486 shows a compositional bias: basic residues; it reads KERRNRRKKKKQK. Basic and acidic residues-rich tracts occupy residues 489 to 509 and 574 to 584; these read SGEE…ESIR and HSIFGDNESRR. Positions 684–708 form a coiled coil; sequence LRQRAMSRASILTNTVEELEESRQK. Residues 725–988 form an II repeat; the sequence is CSPYWIKFKK…EEDTDANNLQ (264 aa). A helical transmembrane segment spans residues 745-761; sequence VDLAITICIVLNTLFMA. The Extracellular segment spans residues 762 to 770; that stretch reads MEHHPMTDE. A helical transmembrane segment spans residues 771–795; sequence FKNVLAVGNLVFTGIFAAEMVLKLI. The Cytoplasmic segment spans residues 796–804; the sequence is AMDPYEYFQ. The helical transmembrane segment at 805-821 threads the bilayer; that stretch reads VGWNIFDSLIVTLSLVE. At 822–830 the chain is on the extracellular side; the sequence is LFLADVEGL. Residues 831-847 form a helical membrane-spanning segment; that stretch reads SVLRSFRLLRVFKLAKS. The Cytoplasmic segment spans residues 848 to 864; that stretch reads WPTLNMLIKIIGNSVGA. A helical membrane pass occupies residues 865 to 887; that stretch reads LGNLTLVLAIIVFIFAVVGMQLF. Over 888-914 the chain is Extracellular; it reads GKSYKECVCKINENCKLPRWHMNDFFH. Cysteine 896 and cysteine 902 are joined by a disulfide. The pore-forming intramembrane region spans 915–927; it reads SFLIVFRVLCGEW. Over 928 to 939 the chain is Extracellular; it reads IETMWDCMEVAG. Cysteines 934 and 943 form a disulfide. Residues 940-966 traverse the membrane as a helical segment; sequence QTMCLIVYMMVMVIGNLVVLNLFLALL. Over 967–1185 the chain is Cytoplasmic; the sequence is LSSFSSDNLT…WWTIRKTCYR (219 aa). 2 disordered regions span residues 1015–1039 and 1089–1145; these read KKPK…YISN and PIAP…EPIN. A compositionally biased stretch (basic and acidic residues) spans 1019–1035; sequence GSKDTKRTADPNNKREN. The segment covering 1135-1145 has biased composition (acidic residues); the sequence is GEEEAEAEPIN. An III repeat occupies 1178-1486; that stretch reads TIRKTCYRIV…KKYYNAMKKL (309 aa). Residues 1186 to 1210 traverse the membrane as a helical segment; that stretch reads IVEHSWFESFIVLMILLSSGALAFE. At 1211–1222 the chain is on the extracellular side; that stretch reads DIYIEKKKTIKI. A helical membrane pass occupies residues 1223-1248; sequence ILEYADKIFTYIFILEMLLKWVAYGY. Over 1249–1250 the chain is Cytoplasmic; sequence KT. The helical transmembrane segment at 1251–1276 threads the bilayer; that stretch reads YFTNAWCWLDFLIVDVSLVTLVANTL. Over 1277–1285 the chain is Extracellular; that stretch reads GYSDLGPIK. The helical transmembrane segment at 1286–1302 threads the bilayer; sequence SLRTLRALRPLRALSRF. Residues 1303 to 1315 are Cytoplasmic-facing; sequence EGMRVVVNALIGA. A helical membrane pass occupies residues 1316–1340; it reads IPSIMNVLLVCLIFWLIFSIMGVNL. At 1341–1392 the chain is on the extracellular side; it reads FAGKFYECVNTTDGSRFSVSQVANRSECFALMNVSGNVRWKNLKVNFDNVGL. A disulfide bridge connects residues cysteine 1348 and cysteine 1368. An intramembrane region (pore-forming) is located at residues 1393–1403; that stretch reads GYLSLLQVATF. Residues 1404 to 1429 lie on the Extracellular side of the membrane; that stretch reads KGWMDIMYAAVDSVNVNAQPIYEYNL. The helical transmembrane segment at 1430–1455 threads the bilayer; sequence YMYIYFVIFIIFGSFFTLNLFIGVII. Topologically, residues 1456–1512 are cytoplasmic; it reads DNFNQQKKKLGGQDIFMTEEQKKYYNAMKKLGSKKPQKPIPRPGNKFQGCIFDLVTN. Residue serine 1488 is modified to Phosphoserine; by PKC. The stretch at 1495–1793 is one IV repeat; that stretch reads IPRPGNKFQG…WEKFDPDATQ (299 aa). The helical transmembrane segment at 1513-1532 threads the bilayer; the sequence is QAFDITIMVLICLNMVTMMV. Residues 1533–1543 are Extracellular-facing; sequence EKEGQTDYMSF. The chain crosses the membrane as a helical span at residues 1544-1565; that stretch reads VLYWINVVFIILFTGECVLKLI. Topologically, residues 1566–1574 are cytoplasmic; the sequence is SLRHYYFTV. A helical membrane pass occupies residues 1575–1596; the sequence is GWNIFDFVVVILSIVGMFLAEM. Residues 1597–1605 are Extracellular-facing; it reads IEKYFVSPT. The chain crosses the membrane as a helical span at residues 1606 to 1625; sequence LFRVIRLARIGRILRLIKGA. Topologically, residues 1626-1638 are cytoplasmic; the sequence is KGIRTLLFALMMS. The helical transmembrane segment at 1639–1661 threads the bilayer; it reads LPALFNIGLLLFLVMFIYAIFGM. At 1662–1684 the chain is on the extracellular side; sequence SNFAYVKKEAGINDMFNFETFGN. Positions 1685 to 1697 form an intramembrane region, pore-forming; that stretch reads SMICLFQITTSAG. Residues 1698-1731 lie on the Extracellular side of the membrane; it reads WDGLLAPILNSAPPDCDPKKVHPGSSVEGDCGNP. A disulfide bond links cysteine 1713 and cysteine 1728. Residues 1732 to 1757 traverse the membrane as a helical segment; that stretch reads SVGIFYFVSYIIISFLVVVNMYIAVI. Over 1758 to 1984 the chain is Cytoplasmic; it reads LENFSVATEE…EDKEKDESRK (227 aa). The IQ domain maps to 1887 to 1916; sequence EDVSATIIQRAYRRYRLRQNVKNISSIYIK. Positions 1933-1984 are disordered; sequence DNVNENSSPEKTDATASTISPPSYDSVTKPDQEKYETDKTEKEDKEKDESRK. Residues 1946-1958 show a composition bias toward polar residues; the sequence is ATASTISPPSYDS. Residues 1960–1984 show a composition bias toward basic and acidic residues; sequence TKPDQEKYETDKTEKEDKEKDESRK.

This sequence belongs to the sodium channel (TC 1.A.1.10) family. Nav1.7/SCN9A subfamily. The Nav1.7 voltage-gated sodium channel consists of an ion-conducting alpha subunit SCN9A which is functional on its own regulated by one or more beta-1 (SCN1B), beta-2 (SCN2B), beta-3 (SCN3B) and beta-4 (SCN4B) subunits. SCN1B and SCN3B are non-covalently associated with SCN9A. SCN2B and SCN4B are disulfide-linked to SCN9A. SCN1B regulates channel inactivation. Interacts with NEDD4 and NEDD4L; regulates Nav1.7 activity most probably through ubiquitination and subsequent endocytosis. Interacts with TMEM233; modulates the gating properties of NaV1.7. In terms of processing, ubiquitinated by NEDD4L; which may promote its endocytosis. Phosphorylation at Ser-1488 by PKC in a highly conserved cytoplasmic loop increases peak sodium currents. In terms of tissue distribution, expressed strongly in sciatic nerves, with moderate levels in kidney. Not detected in liver, brain and muscle.

It localises to the cell membrane. Its subcellular location is the cell projection. The protein resides in the neuron projection. It is found in the axon. It carries out the reaction Na(+)(in) = Na(+)(out). Functionally, pore-forming subunit of Nav1.7, a voltage-gated sodium (Nav) channel that directly mediates the depolarizing phase of action potentials in excitable membranes. Navs, also called VGSCs (voltage-gated sodium channels) or VDSCs (voltage-dependent sodium channels), operate by switching between closed and open conformations depending on the voltage difference across the membrane. In the open conformation they allow Na(+) ions to selectively pass through the pore, along their electrochemical gradient. The influx of Na(+) ions provokes membrane depolarization, initiating the propagation of electrical signals throughout cells and tissues. Nav1.7 plays a crucial role in controlling the excitability and action potential propagation from nociceptor neurons, thereby contributing to the sensory perception of pain. This is Sodium channel protein type 9 subunit alpha from Mus musculus (Mouse).